The chain runs to 103 residues: Potassium voltage-gated channel subfamily E member 3 (103 aa).

Residues Asn-5, Asn-22, and Asn-41 are each glycosylated (N-linked (GlcNAc...) asparagine). Residues 32–53 (RPGPGLGPDNQTEERRASLPGR) are disordered. A compositionally biased stretch (basic and acidic residues) spans 43–53 (TEERRASLPGR). A helical transmembrane segment spans residues 57–77 (SYMYILFVMFLFAVTVGSLIL). An interaction with KCNQ1 region spans residues 68–79 (FAVTVGSLILGY). Topologically, residues 78–103 (GYTRSRKVDKRSDPYHVYIKNRVSMI) are cytoplasmic.

It belongs to the potassium channel KCNE family. Interacts with KCNB1. Interacts with KCNC2. Associates with KCNC4/Kv3.4. Interacts with KCNQ1; associates with a KCNQ1:KCNE3 stoichiometry of 4:4; produces a current with nearly instantaneous activation with a linear current-voltage relationship and alters membrane raft localization; affects KCNQ1 structure and gating properties. As to expression, expressed in hippocampal neurons (at protein level). Widely expressed with highest levels in kidney and moderate levels in small intestine.

It is found in the cell membrane. It localises to the cytoplasm. The protein resides in the perikaryon. Its subcellular location is the cell projection. The protein localises to the dendrite. It is found in the membrane raft. Its function is as follows. Ancillary protein that functions as a regulatory subunit of the voltage-gated potassium (Kv) channel complex composed of pore-forming and potassium-conducting alpha subunits and of regulatory beta subunits. KCNE3 beta subunit modulates the gating kinetics and enhances stability of the channel complex. Alters the gating of the delayed rectifier Kv channel containing KCNB1 alpha subunit. Associates with KCNC4/Kv3.4 alpha subunit to form the subthreshold Kv channel in skeletal muscle and to establish the resting membrane potential (RMP) in muscle cells. Association with KCNQ1/KCLQT1 alpha subunit may form the intestinal cAMP-stimulated potassium channel involved in chloride secretion that produces a current with nearly instantaneous activation with a linear current-voltage relationship. The polypeptide is Potassium voltage-gated channel subfamily E member 3 (Homo sapiens (Human)).